Here is a 259-residue protein sequence, read N- to C-terminus: 3-deoxy-manno-octulosonate cytidylyltransferase (259 aa).

This sequence belongs to the KdsB family.

It is found in the cytoplasm. It carries out the reaction 3-deoxy-alpha-D-manno-oct-2-ulosonate + CTP = CMP-3-deoxy-beta-D-manno-octulosonate + diphosphate. Its pathway is nucleotide-sugar biosynthesis; CMP-3-deoxy-D-manno-octulosonate biosynthesis; CMP-3-deoxy-D-manno-octulosonate from 3-deoxy-D-manno-octulosonate and CTP: step 1/1. It participates in bacterial outer membrane biogenesis; lipopolysaccharide biosynthesis. Activates KDO (a required 8-carbon sugar) for incorporation into bacterial lipopolysaccharide in Gram-negative bacteria. The polypeptide is 3-deoxy-manno-octulosonate cytidylyltransferase (Alkalilimnicola ehrlichii (strain ATCC BAA-1101 / DSM 17681 / MLHE-1)).